Consider the following 172-residue polypeptide: Adenine phosphoribosyltransferase (172 aa).

This sequence belongs to the purine/pyrimidine phosphoribosyltransferase family. As to quaternary structure, homodimer.

It is found in the cytoplasm. The enzyme catalyses AMP + diphosphate = 5-phospho-alpha-D-ribose 1-diphosphate + adenine. Its pathway is purine metabolism; AMP biosynthesis via salvage pathway; AMP from adenine: step 1/1. Catalyzes a salvage reaction resulting in the formation of AMP, that is energically less costly than de novo synthesis. The chain is Adenine phosphoribosyltransferase from Synechocystis sp. (strain ATCC 27184 / PCC 6803 / Kazusa).